Consider the following 147-residue polypeptide: MVFGQQLRNLDEKNRIALPPAFKNKLVEPLYLTIGFDGQADLRSEKEFEKFSAFLDQKNPFDAKIRQIKRQINSNTFEITLDKQGRITIPARIMQWIFAGEELGKEIYFVGAKDYVEIWSKSKFEALNEKVTPVGLEKLVEQAYNEK.

SpoVT-AbrB domains are found at residues 5-47 and 76-123; these read QQLR…SEKE and TFEI…SKSK.

Belongs to the MraZ family. As to quaternary structure, forms oligomers.

It is found in the cytoplasm. It localises to the nucleoid. The chain is Transcriptional regulator MraZ from Mycoplasmopsis synoviae (strain 53) (Mycoplasma synoviae).